Here is a 372-residue protein sequence, read N- to C-terminus: Queuine tRNA-ribosyltransferase (372 aa).

The active-site Proton acceptor is D89. Residues 89 to 93 (DSGGF), D161, and G232 contribute to the substrate site. The RNA binding stretch occupies residues 262–268 (GIGDLPS). The Nucleophile role is filled by D281. The tract at residues 286–290 (TKAAR) is RNA binding; important for wobble base 34 recognition. Residues C319, C321, C324, and H351 each coordinate Zn(2+).

Belongs to the queuine tRNA-ribosyltransferase family. As to quaternary structure, homodimer. Within each dimer, one monomer is responsible for RNA recognition and catalysis, while the other monomer binds to the replacement base PreQ1. Zn(2+) serves as cofactor.

It catalyses the reaction 7-aminomethyl-7-carbaguanine + guanosine(34) in tRNA = 7-aminomethyl-7-carbaguanosine(34) in tRNA + guanine. It functions in the pathway tRNA modification; tRNA-queuosine biosynthesis. In terms of biological role, catalyzes the base-exchange of a guanine (G) residue with the queuine precursor 7-aminomethyl-7-deazaguanine (PreQ1) at position 34 (anticodon wobble position) in tRNAs with GU(N) anticodons (tRNA-Asp, -Asn, -His and -Tyr). Catalysis occurs through a double-displacement mechanism. The nucleophile active site attacks the C1' of nucleotide 34 to detach the guanine base from the RNA, forming a covalent enzyme-RNA intermediate. The proton acceptor active site deprotonates the incoming PreQ1, allowing a nucleophilic attack on the C1' of the ribose to form the product. After dissociation, two additional enzymatic reactions on the tRNA convert PreQ1 to queuine (Q), resulting in the hypermodified nucleoside queuosine (7-(((4,5-cis-dihydroxy-2-cyclopenten-1-yl)amino)methyl)-7-deazaguanosine). In Chlamydia abortus (strain DSM 27085 / S26/3) (Chlamydophila abortus), this protein is Queuine tRNA-ribosyltransferase.